Consider the following 2082-residue polypeptide: Polyketide synthase ThaQ (2082 aa).

The segment at 398-468 is disordered; the sequence is NDARRAGSAR…DSAHDSAHAA (71 aa). Composition is skewed to basic and acidic residues over residues 399–411, 419–430, and 439–468; these read DARR…RDAR, HGARHEAAHDAQ, and ADAH…AHAA. One can recognise a Carrier 1 domain in the interval 470-546; it reads ALRREGRAYL…ALLDHLLAAH (77 aa). Serine 507 is subject to O-(pantetheine 4'-phosphoryl)serine. Low complexity-rich tracts occupy residues 560–582 and 593–605; these read APAR…RAAP and DTPS…APAR. The disordered stretch occupies residues 560 to 655; sequence APARGVGARA…RYAPRAPHPD (96 aa). The segment covering 606 to 631 has biased composition (pro residues); sequence PDQPAPSGPPAQPAQPAPRADTPPPA. Residues 658 to 1077 form the Ketosynthase family 3 (KS3) domain; that stretch reads AEPVAIIGIS…GVNAHVVLEE (420 aa). Disordered regions lie at residues 1250–1269 and 1603–1653; these read APGT…EAAE and ARGP…VKSD. 2 stretches are compositionally biased toward low complexity: residues 1256 to 1269 and 1612 to 1624; these read ASAG…EAAE and SPDA…RAQA. Over residues 1640-1653 the composition is skewed to basic and acidic residues; the sequence is ADSKAGPKSEVKSD. In terms of domain architecture, Carrier 2 spans 1669–1743; the sequence is ASVAASVEDA…ALVRAVAEAV (75 aa). Serine 1703 carries the post-translational modification O-(pantetheine 4'-phosphoryl)serine. The AB hydrolase-1 domain occupies 1792–2022; sequence PRVVLIPGLG…GAGHAVFLTH (231 aa). The segment covering 2045 to 2067 has biased composition (low complexity); sequence GAAESVESVEATEAAEAARSPAV. A disordered region spans residues 2045–2082; that stretch reads GAAESVESVEATEAAEAARSPAVARRRATDDAPVGSDA.

The cofactor is pantetheine 4'-phosphate.

The protein localises to the cytoplasm. It participates in antibiotic biosynthesis. Its function is as follows. Involved in production of the polyketide antibiotic thailandamide. The protein is Polyketide synthase ThaQ of Burkholderia thailandensis (strain ATCC 700388 / DSM 13276 / CCUG 48851 / CIP 106301 / E264).